A 361-amino-acid chain; its full sequence is MLNINIEKQFSQLQLKVNTQLPLQGVTAVFGRSGAGKTSLVNLLGGLTTPDKGEISLGDTLLFKHKTVNLPPEKRRIGYVFQEARLFPHYSVKGNLTYGMRHKTPELFDKVVSLLGIEKLLSRYPSTLSGGEKQRVAIGRALLTSPQMLLMDEPLASLDLPRKRELLPYLQTLAQELKLPIVYVSHSLDEILQLADHMLVLHQGKMISQGPLTQVWNSEQMRPWVPLQELSSLLSARIADRHPDYPMTRLLMDDGNQLWVSGQLPPTHKQLKVRIQANHVSVCTEEPKGSSIRNLLRGKIKELYPSDNGEQIQLKIALGKDELWANITPWARDELQLIPGKAIYAQIKGVTMTQMDIAESH.

The ABC transporter domain occupies 1–228 (MLNINIEKQF…EQMRPWVPLQ (228 aa)). Residue 31–38 (GRSGAGKT) participates in ATP binding. The Mop domain occupies 289–356 (GSSIRNLLRG…IKGVTMTQMD (68 aa)).

It belongs to the ABC transporter superfamily. Molybdate importer (TC 3.A.1.8) family. In terms of assembly, the complex is composed of two ATP-binding proteins (ModC), two transmembrane proteins (ModB) and a solute-binding protein (ModA).

The protein resides in the cell inner membrane. It carries out the reaction molybdate(out) + ATP + H2O = molybdate(in) + ADP + phosphate + H(+). Functionally, part of the ABC transporter complex ModABC involved in molybdenum import. Responsible for energy coupling to the transport system. The polypeptide is Molybdenum import ATP-binding protein ModC (Shewanella sp. (strain MR-4)).